The sequence spans 81 residues: Putative membrane protein insertion efficiency factor (81 aa).

This sequence belongs to the UPF0161 family.

Its subcellular location is the cell inner membrane. Functionally, could be involved in insertion of integral membrane proteins into the membrane. This chain is Putative membrane protein insertion efficiency factor, found in Legionella pneumophila (strain Lens).